The sequence spans 364 residues: UDP-N-acetylglucosamine--N-acetylmuramyl-(pentapeptide) pyrophosphoryl-undecaprenol N-acetylglucosamine transferase (364 aa).

Residues Thr10 to Gly12, Asn128, Arg170, Ser199, Ile250, and Gln295 each bind UDP-N-acetyl-alpha-D-glucosamine.

Belongs to the glycosyltransferase 28 family. MurG subfamily.

The protein resides in the cell inner membrane. It catalyses the reaction di-trans,octa-cis-undecaprenyl diphospho-N-acetyl-alpha-D-muramoyl-L-alanyl-D-glutamyl-meso-2,6-diaminopimeloyl-D-alanyl-D-alanine + UDP-N-acetyl-alpha-D-glucosamine = di-trans,octa-cis-undecaprenyl diphospho-[N-acetyl-alpha-D-glucosaminyl-(1-&gt;4)]-N-acetyl-alpha-D-muramoyl-L-alanyl-D-glutamyl-meso-2,6-diaminopimeloyl-D-alanyl-D-alanine + UDP + H(+). It functions in the pathway cell wall biogenesis; peptidoglycan biosynthesis. Cell wall formation. Catalyzes the transfer of a GlcNAc subunit on undecaprenyl-pyrophosphoryl-MurNAc-pentapeptide (lipid intermediate I) to form undecaprenyl-pyrophosphoryl-MurNAc-(pentapeptide)GlcNAc (lipid intermediate II). The protein is UDP-N-acetylglucosamine--N-acetylmuramyl-(pentapeptide) pyrophosphoryl-undecaprenol N-acetylglucosamine transferase of Chlorobaculum parvum (strain DSM 263 / NCIMB 8327) (Chlorobium vibrioforme subsp. thiosulfatophilum).